The chain runs to 341 residues: L-threonine 3-dehydrogenase (341 aa).

Zn(2+) is bound at residue cysteine 38. Catalysis depends on charge relay system residues threonine 40 and histidine 43. Residues histidine 63, glutamate 64, cysteine 93, cysteine 96, cysteine 99, and cysteine 107 each contribute to the Zn(2+) site. NAD(+) contacts are provided by residues isoleucine 175, aspartate 195, arginine 200, 262–264 (LGI), and 286–287 (IY).

It belongs to the zinc-containing alcohol dehydrogenase family. In terms of assembly, homotetramer. Requires Zn(2+) as cofactor.

It is found in the cytoplasm. It carries out the reaction L-threonine + NAD(+) = (2S)-2-amino-3-oxobutanoate + NADH + H(+). It functions in the pathway amino-acid degradation; L-threonine degradation via oxydo-reductase pathway; glycine from L-threonine: step 1/2. In terms of biological role, catalyzes the NAD(+)-dependent oxidation of L-threonine to 2-amino-3-ketobutyrate. The protein is L-threonine 3-dehydrogenase of Serratia proteamaculans (strain 568).